Consider the following 211-residue polypeptide: Adenylyl-sulfate kinase (211 aa).

ATP is bound at residue 36–43; that stretch reads GLSGSGKS. Ser-110 (phosphoserine intermediate) is an active-site residue.

It belongs to the APS kinase family.

The enzyme catalyses adenosine 5'-phosphosulfate + ATP = 3'-phosphoadenylyl sulfate + ADP + H(+). Its pathway is sulfur metabolism; hydrogen sulfide biosynthesis; sulfite from sulfate: step 2/3. In terms of biological role, catalyzes the synthesis of activated sulfate. The polypeptide is Adenylyl-sulfate kinase (cysC) (Buchnera aphidicola subsp. Schizaphis graminum (strain Sg)).